The sequence spans 153 residues: MNVGVAHSEVNPNTRVMNSRGIWLAYIILVGLLHVVLLSIPFFSIPVVWTLTNVIHNLVMYVFLHTVKGTPFETPDQGKARLLTHWEQMDYGLQFTSSRKFLSISPIVLYLLASFYTKYDAAHFLINTASLLSVLLPKLPQFHGVRLFGINKY.

At Met1–Gly21 the chain is on the cytoplasmic side. The next 2 membrane-spanning stretches (helical) occupy residues Ile22–Phe42 and Phe43–Phe63. Topologically, residues Leu64–Ser105 are cytoplasmic. A helical membrane pass occupies residues Pro106–Ile126. At Asn127 to Tyr153 the chain is on the extracellular side.

Belongs to the ORM family. As to quaternary structure, ceramide-sensitive subunit of the serine palmitoyltransferase (SPT) complex, which is also composed of SPTLC1, SPTLC2/3 and SPTSSA/B.

The protein localises to the endoplasmic reticulum membrane. Plays an essential role in the homeostatic regulation of sphingolipid de novo biosynthesis by modulating the activity of the serine palmitoyltransferase (SPT) in response to ceramide levels. When complexed to SPT, the binding of ceramides to its N-terminus stabilizes a conformation that block SPT substrate entry, hence preventing SPT catalytic activity. Through this mechanism, maintains ceramide levels at sufficient concentrations for the production of complex sphingolipids, but which prevents the accumulation of ceramides to levels that trigger apoptosis. The chain is ORM1-like protein 2 (ORMDL2) from Bos taurus (Bovine).